The following is a 391-amino-acid chain: Putative F-box protein At1g47730 (391 aa).

The segment covering 1-12 (MEQREEKTENIQ) has biased composition (basic and acidic residues). The tract at residues 1–25 (MEQREEKTENIQRKRSRGKSSSSSL) is disordered. The F-box domain maps to 19-68 (KSSSSSLPLDLTSEIFSRLPAKSVVRFRCVSKLWSSITTAPYFTNSFETR).

This chain is Putative F-box protein At1g47730, found in Arabidopsis thaliana (Mouse-ear cress).